Here is a 112-residue protein sequence, read N- to C-terminus: UPF0102 protein Pmob_0702 (112 aa).

The protein belongs to the UPF0102 family.

The protein is UPF0102 protein Pmob_0702 of Petrotoga mobilis (strain DSM 10674 / SJ95).